The chain runs to 463 residues: Probable mannan endo-1,4-beta-mannosidase F (463 aa).

An N-terminal signal peptide occupies residues 1 to 18; that stretch reads MRSLSSIALLSVVGAASA. One can recognise a CBM1 domain in the interval 19 to 54; it reads QAGPWAQCGGKSFSGSSECASGWKCQELNEWFSQCV. Positions 57-78 are disordered; sequence AESTTPTVSSTPTPTDAPSVSI. The span at 59 to 77 shows a compositional bias: low complexity; the sequence is STTPTVSSTPTPTDAPSVS. Residues 75 to 118 form a ser-rich linker region; the sequence is SVSITASVTTGINKSISVSSASKSTPLPSSSSASPSPRPTGSGS. A glycan (N-linked (GlcNAc...) asparagine) is linked at Asn87. Over residues 93 to 118 the composition is skewed to low complexity; the sequence is SSASKSTPLPSSSSASPSPRPTGSGS. A disordered region spans residues 93-121; it reads SSASKSTPLPSSSSASPSPRPTGSGSFAK. The interval 119–463 is catalytic; sequence FAKADGLQFS…MDHMENVNKN (345 aa). 2 residues coordinate substrate: Trp171 and Asn285. Catalysis depends on Glu286, which acts as the Proton donor/acceptor. Tyr361 contacts substrate. Glu395 (nucleophile) is an active-site residue. Trp424 is a binding site for substrate.

The protein belongs to the glycosyl hydrolase 5 (cellulase A) family.

It is found in the secreted. The enzyme catalyses Random hydrolysis of (1-&gt;4)-beta-D-mannosidic linkages in mannans, galactomannans and glucomannans.. In terms of biological role, endo-1,4-mannanase, a crucial enzyme for depolymerization of seed galactomannans and wood galactoglucomannans. In Aspergillus oryzae (strain ATCC 42149 / RIB 40) (Yellow koji mold), this protein is Probable mannan endo-1,4-beta-mannosidase F (manF).